The chain runs to 201 residues: Flagellin B1 (201 aa).

Residues 1–11 (MFEQNDDRDRG) constitute a propeptide that is removed on maturation.

This sequence belongs to the archaeal flagellin family.

It is found in the archaeal flagellum. Its function is as follows. Flagellin is the subunit protein which polymerizes to form the filaments of archaeal flagella. The polypeptide is Flagellin B1 (flaB1) (Natrialba magadii (strain ATCC 43099 / DSM 3394 / CCM 3739 / CIP 104546 / IAM 13178 / JCM 8861 / NBRC 102185 / NCIMB 2190 / MS3) (Natronobacterium magadii)).